The chain runs to 154 residues: MGLSDGEWHLVLNVWGKWETDLAGHGQEVLIRLFKSHPETLEKFDKFKHLKSEDDMRRSFDLRKHGNTVLTALGGILKKKGHHEAELKPLAQSHATKHKIPIKYLEFISEAIIHVLHSKHPAEFGADAQAAMKKALELFRNDIAAKIKELGFHG.

Positions 2–148 constitute a Globin domain; that stretch reads GLSDGEWHLV…FRNDIAAKIK (147 aa). Ser4 is modified (phosphoserine). A nitrite-binding site is contributed by His65. His65 is an O2 binding site. Phosphothreonine is present on Thr68. His94 is a heme b binding site.

It belongs to the globin family. As to quaternary structure, monomeric.

Its subcellular location is the cytoplasm. The protein resides in the sarcoplasm. The enzyme catalyses Fe(III)-heme b-[protein] + nitric oxide + H2O = Fe(II)-heme b-[protein] + nitrite + 2 H(+). The catalysed reaction is H2O2 + AH2 = A + 2 H2O. Its function is as follows. Monomeric heme protein which primary function is to store oxygen and facilitate its diffusion within muscle tissues. Reversibly binds oxygen through a pentacoordinated heme iron and enables its timely and efficient release as needed during periods of heightened demand. Depending on the oxidative conditions of tissues and cells, and in addition to its ability to bind oxygen, it also has a nitrite reductase activity whereby it regulates the production of bioactive nitric oxide. Under stress conditions, like hypoxia and anoxia, it also protects cells against reactive oxygen species thanks to its pseudoperoxidase activity. This is Myoglobin (MB) from Pusa sibirica (Baikal seal).